We begin with the raw amino-acid sequence, 132 residues long: Glycine cleavage system H protein (132 aa).

A Lipoyl-binding domain is found at 24-106; it reads IATIGLSAFA…YGDGWLIKVR (83 aa). Lys65 bears the N6-lipoyllysine mark.

Belongs to the GcvH family. As to quaternary structure, the glycine cleavage system is composed of four proteins: P, T, L and H. Requires (R)-lipoate as cofactor.

Functionally, the glycine cleavage system catalyzes the degradation of glycine. The H protein shuttles the methylamine group of glycine from the P protein to the T protein. The protein is Glycine cleavage system H protein of Rippkaea orientalis (strain PCC 8801 / RF-1) (Cyanothece sp. (strain PCC 8801)).